The primary structure comprises 648 residues: MSRKASENVEYTLRSLSSLMGERRRKQPEPDAASAAGECSLLAAAESSTSLQSAGAGGGGVGDLERAARRQFQQDETPAFVYVVAVFSALGGFLFGYDTGVVSGAMLLLKRQLSLDALWQELLVSSTVGAAAVSALAGGALNGVFGRRAAILLASALFTAGSAVLAAANNKETLLAGRLVVGLGIGIASMTVPVYIAEVSPPNLRGRLVTINTLFITGGQFFASVVDGAFSYLQKDGWRYMLGLAAVPAVIQFFGFLFLPESPRWLIQKGQTQKARRILSQMRGNQTIDEEYDSIKNNIEEEEKEVGSAGPVICRMLSYPPTRRALIVGCGLQMFQQLSGINTIMYYSATILQMSGVEDDRLAIWLASVTAFTNFIFTLVGVWLVEKVGRRKLTFGSLAGTTVALIILALGFVLSAQVSPRITFKPIAPSGQNATCTRYSYCNECMLDPDCGFCYKMNKSTVIDSSCVPVNKASTNEAAWGRCENETKFKTEDIFWAYNFCPTPYSWTALLGLILYLVFFAPGMGPMPWTVNSEIYPLWARSTGNACSSGINWIFNVLVSLTFLHTAEYLTYYGAFFLYAGFAAVGLLFIYGCLPETKGKKLEEIESLFDNRLCTCGTSDSDEGRYIEYIRVKGSNYHLSDNDASDVE.

At 1–76 (MSRKASENVE…AARRQFQQDE (76 aa)) the chain is on the cytoplasmic side. S6, S47, and S50 each carry phosphoserine. Residues 77-97 (TPAFVYVVAVFSALGGFLFGY) traverse the membrane as a helical segment. Residues 98-125 (DTGVVSGAMLLLKRQLSLDALWQELLVS) are Extracellular-facing. A helical membrane pass occupies residues 126 to 146 (STVGAAAVSALAGGALNGVFG). Residues 147–148 (RR) are Cytoplasmic-facing. Residues 149–169 (AAILLASALFTAGSAVLAAAN) form a helical membrane-spanning segment. The Extracellular segment spans residues 170 to 178 (NKETLLAGR). Residues 179–199 (LVVGLGIGIASMTVPVYIAEV) form a helical membrane-spanning segment. Topologically, residues 200-212 (SPPNLRGRLVTIN) are cytoplasmic. Residues 213–233 (TLFITGGQFFASVVDGAFSYL) traverse the membrane as a helical segment. Over 234–239 (QKDGWR) the chain is Extracellular. A helical membrane pass occupies residues 240 to 260 (YMLGLAAVPAVIQFFGFLFLP). The Cytoplasmic segment spans residues 261–324 (ESPRWLIQKG…RMLSYPPTRR (64 aa)). A helical membrane pass occupies residues 325–345 (ALIVGCGLQMFQQLSGINTIM). Over 346–363 (YYSATILQMSGVEDDRLA) the chain is Extracellular. Residues 364-384 (IWLASVTAFTNFIFTLVGVWL) form a helical membrane-spanning segment. The Cytoplasmic segment spans residues 385–393 (VEKVGRRKL). Residues 394-414 (TFGSLAGTTVALIILALGFVL) traverse the membrane as a helical segment. Residues 415 to 508 (SAQVSPRITF…NFCPTPYSWT (94 aa)) are Extracellular-facing. 3 N-linked (GlcNAc...) asparagine glycosylation sites follow: N433, N458, and N485. The chain crosses the membrane as a helical span at residues 509 to 529 (ALLGLILYLVFFAPGMGPMPW). Over 530–549 (TVNSEIYPLWARSTGNACSS) the chain is Cytoplasmic. A helical transmembrane segment spans residues 550–570 (GINWIFNVLVSLTFLHTAEYL). The Extracellular segment spans residues 571–573 (TYY). Residues 574 to 594 (GAFFLYAGFAAVGLLFIYGCL) form a helical membrane-spanning segment. The Cytoplasmic portion of the chain corresponds to 595-648 (PETKGKKLEEIESLFDNRLCTCGTSDSDEGRYIEYIRVKGSNYHLSDNDASDVE). Residues S640 and S645 each carry the phosphoserine modification.

The protein belongs to the major facilitator superfamily. Sugar transporter (TC 2.A.1.1) family. Glycosylated. As to expression, predominantly expressed in the brain.

It localises to the cell membrane. It carries out the reaction myo-inositol(out) + H(+)(out) = myo-inositol(in) + H(+)(in). Functionally, h(+)-myo-inositol cotransporter. Can also transport related stereoisomers. This is Proton myo-inositol cotransporter from Homo sapiens (Human).